Here is a 159-residue protein sequence, read N- to C-terminus: Small ribosomal subunit protein uS7 (159 aa).

This sequence belongs to the universal ribosomal protein uS7 family. In terms of assembly, part of the 30S ribosomal subunit. Contacts proteins S9 and S11.

Functionally, one of the primary rRNA binding proteins, it binds directly to 16S rRNA where it nucleates assembly of the head domain of the 30S subunit. Is located at the subunit interface close to the decoding center, probably blocks exit of the E-site tRNA. This chain is Small ribosomal subunit protein uS7, found in Rickettsia felis (strain ATCC VR-1525 / URRWXCal2) (Rickettsia azadi).